A 211-amino-acid chain; its full sequence is uncharacterized protein (211 aa).

This sequence belongs to the nucleoside deoxyribosyltransferase family.

It is found in the cytoplasm. Its subcellular location is the nucleus. This is an uncharacterized protein from Schizosaccharomyces pombe (strain 972 / ATCC 24843) (Fission yeast).